The primary structure comprises 187 residues: MPREVNIRIAGTGGQGVIKAGLVLAEAFALEGKNVVQTQSYGPEARGGASRADIIVSDDEIDFPGLRRVDYLLVLHDSAYRKYYPQVDGETHVIYDSSLVNARRGLGFPFTETSIREFGTPLFANMIAIGALTAMLGLQPEKVEVVIQKRMRKAEENVKAFRIGFEMGRRVTKPKVVSHVVKPYILS.

Heterotetramer of the KorA, KorB, KorC and KorD subunits.

The catalysed reaction is 2 oxidized [2Fe-2S]-[ferredoxin] + 2-oxoglutarate + CoA = succinyl-CoA + 2 reduced [2Fe-2S]-[ferredoxin] + CO2 + H(+). In Archaeoglobus fulgidus (strain ATCC 49558 / DSM 4304 / JCM 9628 / NBRC 100126 / VC-16), this protein is 2-oxoglutarate synthase subunit KorC (korC).